Consider the following 202-residue polypeptide: Protein Thf1 (202 aa).

A coiled-coil region spans residues 174 to 202 (IYKSSILKMEQAKELLQEAKIKDKKEKKK).

Belongs to the THF1 family.

May be involved in photosynthetic membrane biogenesis. The polypeptide is Protein Thf1 (Prochlorococcus marinus subsp. pastoris (strain CCMP1986 / NIES-2087 / MED4)).